A 425-amino-acid chain; its full sequence is Serine--tRNA ligase (425 aa).

Residue T231–E233 coordinates L-serine. R262–E264 contributes to the ATP binding site. E285 contacts L-serine. E349 to S352 contacts ATP. L-serine is bound at residue S385.

It belongs to the class-II aminoacyl-tRNA synthetase family. Type-1 seryl-tRNA synthetase subfamily. In terms of assembly, homodimer. The tRNA molecule binds across the dimer.

It localises to the cytoplasm. It catalyses the reaction tRNA(Ser) + L-serine + ATP = L-seryl-tRNA(Ser) + AMP + diphosphate + H(+). It carries out the reaction tRNA(Sec) + L-serine + ATP = L-seryl-tRNA(Sec) + AMP + diphosphate + H(+). It participates in aminoacyl-tRNA biosynthesis; selenocysteinyl-tRNA(Sec) biosynthesis; L-seryl-tRNA(Sec) from L-serine and tRNA(Sec): step 1/1. Its function is as follows. Catalyzes the attachment of serine to tRNA(Ser). Is also able to aminoacylate tRNA(Sec) with serine, to form the misacylated tRNA L-seryl-tRNA(Sec), which will be further converted into selenocysteinyl-tRNA(Sec). The sequence is that of Serine--tRNA ligase from Bartonella quintana (strain Toulouse) (Rochalimaea quintana).